Reading from the N-terminus, the 36-residue chain is DGECGGFWWKCGSGKPACCPKYVCSPKWGLCNFPMP.

Intrachain disulfides connect C4–C19, C11–C24, and C18–C31.

Belongs to the neurotoxin 10 (Hwtx-1) family. 44 (Jztx-4) subfamily. Expressed by the venom gland.

The protein resides in the secreted. In terms of biological role, gating modifier of Kv2.1/KCNB1, Kv2.2/KCNB2 and Kv4.3/KCND3 channels. The protein is Kappa-theraphotoxin-Pg1b of Chilobrachys guangxiensis (Chinese earth tiger tarantula).